The primary structure comprises 144 residues: Peptidyl-Asp metalloendopeptidase (144 aa).

Residue histidine 64 coordinates Zn(2+). Glutamate 65 is an active-site residue. Residue histidine 68 participates in Zn(2+) binding.

Belongs to the peptidase M72 family. Zn(2+) serves as cofactor.

It carries out the reaction Cleavage of Xaa-|-Asp, Xaa-|-Glu and Xaa-|-cysteic acid bonds.. Its function is as follows. Metalloprotease, specifically cleaves on the N-terminal side of aspartyl, glutamyl and cysteic acid residues. This is Peptidyl-Asp metalloendopeptidase from Pseudomonas fragi.